We begin with the raw amino-acid sequence, 104 residues long: Cell cycle protein GpsB (104 aa).

The stretch at leucine 34 to arginine 72 forms a coiled coil. Over residues threonine 60 to threonine 71 the composition is skewed to basic and acidic residues. Residues threonine 60 to threonine 82 are disordered. Polar residues predominate over residues histidine 73–threonine 82.

It belongs to the GpsB family. Forms polymers through the coiled coil domains. Interacts with PBP1, MreC and EzrA.

The protein localises to the cytoplasm. Functionally, divisome component that associates with the complex late in its assembly, after the Z-ring is formed, and is dependent on DivIC and PBP2B for its recruitment to the divisome. Together with EzrA, is a key component of the system that regulates PBP1 localization during cell cycle progression. Its main role could be the removal of PBP1 from the cell pole after pole maturation is completed. Also contributes to the recruitment of PBP1 to the division complex. Not essential for septum formation. The sequence is that of Cell cycle protein GpsB from Halalkalibacterium halodurans (strain ATCC BAA-125 / DSM 18197 / FERM 7344 / JCM 9153 / C-125) (Bacillus halodurans).